Consider the following 238-residue polypeptide: Bacterial microcompartment shell protein PduB (238 aa).

2 consecutive BMC circularly permuted domains span residues 14 to 125 and 126 to 225; these read FVGA…VYNA and KAGH…LSQF. An intrachain disulfide couples C158 to C197.

The protein belongs to the EutL/PduB family. Homotrimerizes to form a pseudohexamer with a central pore 7.5 Angstroms wide and 22 Angstroms long; the pore channel in the crystal binds up to 4 glycerol molecules. A disulfide bond forms in the pore, it is not clear if this is an artifact. The trimers pack into an array.

It is found in the bacterial microcompartment. It participates in polyol metabolism; 1,2-propanediol degradation. Its function is as follows. One of the major shell proteins of the bacterial microcompartment (BMC) dedicated to 1,2-propanediol (1,2-PD) degradation. Probably involved in a propanediol fermentation/reuterin formation pathway. This chain is Bacterial microcompartment shell protein PduB, found in Limosilactobacillus reuteri (strain DSM 20016) (Lactobacillus reuteri).